Reading from the N-terminus, the 346-residue chain is Phosphoribosylformylglycinamidine cyclo-ligase (346 aa).

Belongs to the AIR synthase family.

The protein resides in the cytoplasm. The catalysed reaction is 2-formamido-N(1)-(5-O-phospho-beta-D-ribosyl)acetamidine + ATP = 5-amino-1-(5-phospho-beta-D-ribosyl)imidazole + ADP + phosphate + H(+). It participates in purine metabolism; IMP biosynthesis via de novo pathway; 5-amino-1-(5-phospho-D-ribosyl)imidazole from N(2)-formyl-N(1)-(5-phospho-D-ribosyl)glycinamide: step 2/2. In Bacillus cereus (strain ATCC 10987 / NRS 248), this protein is Phosphoribosylformylglycinamidine cyclo-ligase.